Consider the following 390-residue polypeptide: Transforming growth factor beta-1 proprotein (390 aa).

Residues 1 to 29 (MPPSGLRLLPLLLPLLWLLMLTPGRPVAG) form the signal peptide. The tract at residues 30–74 (LSTCKTIDMELVKRKGIEAIRGQILSKLRLASPPSQGDVPPGPLP) is straightjacket domain. An arm domain region spans residues 75-271 (EAILALYNST…ATPLERAQHL (197 aa)). 3 N-linked (GlcNAc...) asparagine glycosylation sites follow: asparagine 82, asparagine 136, and asparagine 176. The tract at residues 226 to 252 (DSKDNTLQVDINGFSSGRRGDLATIHG) is bowtie tail. Residues 244–246 (RGD) carry the Cell attachment site motif. Cystine bridges form between cysteine 285-cysteine 294, cysteine 293-cysteine 356, cysteine 322-cysteine 387, and cysteine 326-cysteine 389.

Belongs to the TGF-beta family. Homodimer; disulfide-linked. Interacts with the serine proteases, HTRA1 and HTRA3: the interaction with either inhibits TGFB1-mediated signaling and the HTRA protease activity is required for this inhibition. May interact with THSD4; this interaction may lead to sequestration by FBN1 microfibril assembly and attenuation of TGFB signaling. Interacts with CD109, DPT and ASPN. Interacts with EFEMP2. Interacts with TSKU; the interaction contributes to regulation of the hair cycle. Interacts with TGFBR3. In terms of assembly, homodimer; disulfide-linked. Interacts with transforming growth factor beta-1 (TGF-beta-1) chain; interaction is non-covalent and maintains TGF-beta-1 in a latent state; each latency-associated peptide (LAP) monomer interacts with TGF-beta-1 in the other monomer. Interacts with LTBP1; leading to regulation of TGF-beta-1 activation. Interacts with LRRC32/GARP; leading to regulation of TGF-beta-1 activation on the surface of activated regulatory T-cells (Tregs). Interacts with LRRC33/NRROS; leading to regulation of TGF-beta-1 activation in macrophages and microglia. Interacts (via cell attachment site) with integrins ITGAV and ITGB6 (ITGAV:ITGB6), leading to release of the active TGF-beta-1. Interacts with NREP; the interaction results in a decrease in TGFB1 autoinduction. Interacts with HSP90AB1; inhibits latent TGFB1 activation. As to quaternary structure, homodimer; disulfide-linked. Interacts with TGF-beta receptors (TGFBR1 and TGFBR2), leading to signal transduction. Post-translationally, transforming growth factor beta-1 proprotein: The precursor proprotein is cleaved in the Golgi apparatus by FURIN to form Transforming growth factor beta-1 (TGF-beta-1) and Latency-associated peptide (LAP) chains, which remain non-covalently linked, rendering TGF-beta-1 inactive. In terms of processing, N-glycosylated. Deglycosylation leads to activation of Transforming growth factor beta-1 (TGF-beta-1); mechanisms triggering deglycosylation-driven activation of TGF-beta-1 are however unclear.

The protein resides in the secreted. The protein localises to the extracellular space. It localises to the extracellular matrix. In terms of biological role, transforming growth factor beta-1 proprotein: Precursor of the Latency-associated peptide (LAP) and Transforming growth factor beta-1 (TGF-beta-1) chains, which constitute the regulatory and active subunit of TGF-beta-1, respectively. Its function is as follows. Required to maintain the Transforming growth factor beta-1 (TGF-beta-1) chain in a latent state during storage in extracellular matrix. Associates non-covalently with TGF-beta-1 and regulates its activation via interaction with 'milieu molecules', such as LTBP1, LRRC32/GARP and LRRC33/NRROS, that control activation of TGF-beta-1. Interaction with LRRC33/NRROS regulates activation of TGF-beta-1 in macrophages and microglia. Interaction with LRRC32/GARP controls activation of TGF-beta-1 on the surface of activated regulatory T-cells (Tregs). Interaction with integrins (ITGAV:ITGB6 or ITGAV:ITGB8) results in distortion of the Latency-associated peptide chain and subsequent release of the active TGF-beta-1. Multifunctional protein that regulates the growth and differentiation of various cell types and is involved in various processes, such as normal development, immune function, microglia function and responses to neurodegeneration. Activation into mature form follows different steps: following cleavage of the proprotein in the Golgi apparatus, Latency-associated peptide (LAP) and Transforming growth factor beta-1 (TGF-beta-1) chains remain non-covalently linked rendering TGF-beta-1 inactive during storage in extracellular matrix. At the same time, LAP chain interacts with 'milieu molecules', such as LTBP1, LRRC32/GARP and LRRC33/NRROS that control activation of TGF-beta-1 and maintain it in a latent state during storage in extracellular milieus. TGF-beta-1 is released from LAP by integrins (ITGAV:ITGB6 or ITGAV:ITGB8): integrin-binding to LAP stabilizes an alternative conformation of the LAP bowtie tail and results in distortion of the LAP chain and subsequent release of the active TGF-beta-1. Once activated following release of LAP, TGF-beta-1 acts by binding to TGF-beta receptors (TGFBR1 and TGFBR2), which transduce signal. While expressed by many cells types, TGF-beta-1 only has a very localized range of action within cell environment thanks to fine regulation of its activation by Latency-associated peptide chain (LAP) and 'milieu molecules'. Plays an important role in bone remodeling: acts as a potent stimulator of osteoblastic bone formation, causing chemotaxis, proliferation and differentiation in committed osteoblasts. Can promote either T-helper 17 cells (Th17) or regulatory T-cells (Treg) lineage differentiation in a concentration-dependent manner. At high concentrations, leads to FOXP3-mediated suppression of RORC and down-regulation of IL-17 expression, favoring Treg cell development. At low concentrations in concert with IL-6 and IL-21, leads to expression of the IL-17 and IL-23 receptors, favoring differentiation to Th17 cells. Stimulates sustained production of collagen through the activation of CREB3L1 by regulated intramembrane proteolysis (RIP). Mediates SMAD2/3 activation by inducing its phosphorylation and subsequent translocation to the nucleus. Positively regulates odontoblastic differentiation in dental papilla cells, via promotion of IPO7-mediated translocation of phosphorylated SMAD2 to the nucleus and subsequent transcription of target genes. Can induce epithelial-to-mesenchymal transition (EMT) and cell migration in various cell types. The polypeptide is Transforming growth factor beta-1 proprotein (TGFB1) (Ovis aries (Sheep)).